Reading from the N-terminus, the 559-residue chain is MLKHVAAALLLATAMPVVAQSPAPAAAPAPAARSIAATPPKLIVAISVDQFSADLFSEYRQYYTGGLKRLTSEGAVFPRGYQSHAATETCPGHSTILTGSRPSRTGIIANNWFDLDAKREDKNLYCAEDESQPGSSSDKYEASPLHLKVPTLGGRMKAANPATRVVSVAGKDRAAIMMGGATADQVWWLGGPQGYVSYKGVAPTPLVTQVNQAFAQRLAQPNPGFELPAQCVSKDFPVQAGNRTVGTGRFARDAGDYKGFRISPEQDAMTLAFAAAAIENMQLGKQAQTDIISIGLSATDYVGHTFGTEGTESCIQVDRLDTELGAFFDKLDKDGIDYVVVLTADHGGHDLPERHRMNAMPMEQRVDMALTPKALNATIAEKAGLPGKKVIWSDGPSGDIYYDKGLTAAQRARVETEALKYLRAHPQVQTVFTKAEIAATPSPSGPPESWSLIQEARASFYPSRSGDLLLLLKPRVMSIPEQAVMGSVATHGSPWDTDRRVPILFWRKGMQHFEQPLGVETVDILPSLAALIKLPVPKDQIDGRCLDLVAGKDDSCAGQ.

The first 19 residues, 1-19 (MLKHVAAALLLATAMPVVA), serve as a signal peptide directing secretion. Zn(2+) contacts are provided by Asp-49 and Thr-89. The active-site Phosphothreonine intermediate is Thr-89. Cys-90 and Cys-126 form a disulfide bridge. Residues Asn-110 and 171–173 (KDR) contribute to the substrate site. An intrachain disulfide couples Cys-231 to Cys-314. Positions 300, 304, 345, 346, and 491 each coordinate Zn(2+). Cys-545 and Cys-556 are disulfide-bonded.

In terms of assembly, monomer. It depends on Zn(2+) as a cofactor.

The protein localises to the secreted. It catalyses the reaction a phosphate monoester + H2O = an alcohol + phosphate. Its function is as follows. Alkaline phosphatase with broad substrate specificity. Precipitates uranium from alkaline solutions. This is Alkaline phosphatase PhoK from Sphingomonas sp.